We begin with the raw amino-acid sequence, 806 residues long: Zygotic DNA replication licensing factor mcm3 (806 aa).

One can recognise an MCM domain in the interval 295 to 502 (VFEQLSRSLA…HDREISDHVL (208 aa)). 345 to 352 (GDPSVAKS) serves as a coordination point for ATP. Residues 477–480 (SRFD) carry the Arginine finger motif. The disordered stretch occupies residues 662–738 (KKRRRREGES…TDSSAKPGLS (77 aa)). Residues 693-702 (AQDGESHDPY) show a composition bias toward basic and acidic residues.

Belongs to the MCM family. As to quaternary structure, component of the mcm2-7 complex (RLF-M). The complex forms a toroidal hexameric ring with the proposed subunit order mcm2-mcm6-mcm4-mcm7-mcm3-mcm5. Begins to associate with zmcm6 into mcm complexes at the neurula stage. Component of the CMG helicase complex, composed of the mcm2-7 complex, the GINS complex and cdc45.

It is found in the nucleus. It localises to the chromosome. The enzyme catalyses ATP + H2O = ADP + phosphate + H(+). Acts as a component of the mcm2-7 complex (mcm complex) which is the putative replicative helicase essential for 'once per cell cycle' DNA replication initiation and elongation in eukaryotic cells. The active ATPase sites in the mcm2-7 ring are formed through the interaction surfaces of two neighboring subunits such that a critical structure of a conserved arginine finger motif is provided in trans relative to the ATP-binding site of the Walker A box of the adjacent subunit. The six ATPase active sites, however, are likely to contribute differentially to the complex helicase activity. The existence of maternal and zygotic forms of mcm3 and mcm6 suggests that specific forms of mcm2-7 complexes may be used during different stages of development. The polypeptide is Zygotic DNA replication licensing factor mcm3 (Xenopus laevis (African clawed frog)).